The chain runs to 676 residues: WD repeat-containing protein 48 (676 aa).

Position 28 is a phosphotyrosine (Y28). WD repeat units follow at residues 28–67 (YNRN…QDPY), 73–112 (HHTD…CMST), 115–154 (THKD…ALTA), 166–205 (GNKD…KLMK), 208–247 (GHTD…CIAT), 250–289 (VHDE…IRVL), 292–334 (EEKA…NFRA), and 358–397 (KGGA…KVED). N6-acetyllysine is present on K214. Position 578 is an N6-acetyllysine (K578). Residues 607–628 (LDNESQTTSSSNNEKPEQEKEE) form a disordered region. The span at 609 to 619 (NESQTTSSSNN) shows a compositional bias: low complexity. Residue T613 is modified to Phosphothreonine.

The protein belongs to the WD repeat WDR48 family. In terms of assembly, interacts with USP46. Interacts with USP1. Interacts with USP12. Component of the USP12-WDR20-WDR48 deubiquitinating complex. Component of the USP12-DMWD-WDR48 deubiquitinating complex. Interacts with PHLPP1. Interacts with RAD51AP1; the interaction is direct and promotes formation of a trimeric complex with RAD51 via RAD51AP1. Interacts with ATAD5; the interaction regulates USP1-mediated PCNA deubiquitination. Interacts with RAD51; the interaction is enhanced under replication stress. Interacts with ITCH; the interaction is more efficient when both USP12 and WDR48/UAF1 are involved and may facilitate recruitment of the USP12 deubiquitinating complex to Notch.

It localises to the nucleus. It is found in the cytoplasm. Its subcellular location is the lysosome. The protein resides in the late endosome. Functionally, regulator of deubiquitinating complexes, which acts as a strong activator of USP1, USP12 and USP46. Enhances the USP1-mediated deubiquitination of FANCD2; USP1 being almost inactive by itself. Activates deubiquitination by increasing the catalytic turnover without increasing the affinity of deubiquitinating enzymes for the substrate. Also activates deubiquitinating activity of complexes containing USP12. Docks at the distal end of the USP12 fingers domain and induces a cascade of structural changes leading to the activation of the enzyme. Together with RAD51AP1, promotes DNA repair by stimulating RAD51-mediated homologous recombination. Binds single-stranded DNA (ssDNA) and double-stranded DNA (dsDNA). DNA-binding is required both for USP1-mediated deubiquitination of FANCD2 and stimulation of RAD51-mediated homologous recombination: both WDR48/UAF1 and RAD51AP1 have coordinated role in DNA-binding during these processes. Together with ATAD5 and by regulating USP1 activity, has a role in PCNA-mediated translesion synthesis (TLS) by deubiquitinating monoubiquitinated PCNA. Together with ATAD5, has a role in recruiting RAD51 to stalled forks during replication stress. The chain is WD repeat-containing protein 48 (Wdr48) from Mus musculus (Mouse).